A 535-amino-acid polypeptide reads, in one-letter code: Beta-amylase 1, chloroplastic (535 aa).

Residues 1 to 36 (MALNLAQSAAAAACFATAGDARRAASVVAMPSSSSS) constitute a chloroplast transit peptide. Residues Asp115, His155, and Asp163 each coordinate substrate. The active-site Proton donor is the Glu247. Positions 361, 366, and 408 each coordinate substrate. The active-site Proton acceptor is the Glu446. Substrate-binding positions include 447 to 448 (NA) and Arg480.

The protein belongs to the glycosyl hydrolase 14 family.

It localises to the plastid. It is found in the chloroplast. It carries out the reaction Hydrolysis of (1-&gt;4)-alpha-D-glucosidic linkages in polysaccharides so as to remove successive maltose units from the non-reducing ends of the chains.. Its function is as follows. Possesses beta-amylase activity in vitro. May be involved in cold resistance by mediating the accumulation of maltose upon freezing stress, thus contributing to the protection of membranes. The chain is Beta-amylase 1, chloroplastic from Oryza sativa subsp. japonica (Rice).